Consider the following 146-residue polypeptide: Protein translocase subunit SecE (146 aa).

The disordered stretch occupies residues 1-81 (MSDERYAASD…KVKKPKKSAD (81 aa)). Positions 10-20 (DGGGTEVGSGT) are enriched in gly residues. Residues 45–54 (RAANASNTGA) show a composition bias toward polar residues. Basic and acidic residues predominate over residues 69–81 (KEGKVKKPKKSAD). The helical transmembrane segment at 118 to 138 (VVLAFLAFMVALVGLADFGLA) threads the bilayer.

Belongs to the SecE/SEC61-gamma family. In terms of assembly, component of the Sec protein translocase complex. Heterotrimer consisting of SecY, SecE and SecG subunits. The heterotrimers can form oligomers, although 1 heterotrimer is thought to be able to translocate proteins. Interacts with the ribosome. Interacts with SecDF, and other proteins may be involved. Interacts with SecA.

The protein resides in the cell membrane. In terms of biological role, essential subunit of the Sec protein translocation channel SecYEG. Clamps together the 2 halves of SecY. May contact the channel plug during translocation. The sequence is that of Protein translocase subunit SecE from Mycobacterium leprae (strain TN).